A 521-amino-acid polypeptide reads, in one-letter code: Sodium/hydrogen exchanger 5 (521 aa).

Residues M1–A23 are Cytoplasmic-facing. A helical membrane pass occupies residues G24–L44. At R45–R48 the chain is on the lumenal side. Residues F49–A69 form a helical membrane-spanning segment. Topologically, residues N70 to E86 are cytoplasmic. Positions E87 to P107 form an intramembrane region, helical. At K108–G115 the chain is on the cytoplasmic side. A helical membrane pass occupies residues A116 to V136. Topologically, residues Y137–S141 are lumenal. Intramembrane regions (helical) lie at residues M142–A162 and V166–F186. Over G187–R222 the chain is Lumenal. Residues F223 to L243 traverse the membrane as a helical segment. At L244 to Y271 the chain is on the cytoplasmic side. Residues M272–M292 form a helical membrane-spanning segment. Over K293 to S310 the chain is Lumenal. Residue N299 is glycosylated (N-linked (GlcNAc...) asparagine). A helical membrane pass occupies residues F311–I331. Over A332–H340 the chain is Cytoplasmic. A helical membrane pass occupies residues V341 to G361. Residues C362–K382 lie on the Lumenal side of the membrane. The helical transmembrane segment at A383–L402 threads the bilayer. Residues H403–Q411 lie on the Cytoplasmic side of the membrane. The helical transmembrane segment at I412–T432 threads the bilayer. Residues G433 to E521 are Lumenal-facing. The segment at G453 to G480 is disordered. Positions S467–G480 are enriched in low complexity.

It belongs to the monovalent cation:proton antiporter 1 (CPA1) transporter (TC 2.A.36) family. In terms of tissue distribution, expressed in roots, leaves, stems, flowers and siliques. Detected at low levels in roots and shoots.

The protein localises to the endosome membrane. The protein resides in the golgi apparatus. It is found in the trans-Golgi network membrane. It localises to the golgi stack membrane. It carries out the reaction Na(+)(in) + H(+)(out) = Na(+)(out) + H(+)(in). The enzyme catalyses K(+)(in) + H(+)(out) = K(+)(out) + H(+)(in). In terms of biological role, involved in trafficking to the vacuole. Required for cell proliferation and cell expansion, but not for cell differentiation. Acts in low affinity electroneutral exchange of protons for cations such as Na(+) or K(+) across membranes. May also exchange Li(+) and Cs(+) with a lower affinity. The polypeptide is Sodium/hydrogen exchanger 5 (NHX5) (Arabidopsis thaliana (Mouse-ear cress)).